The primary structure comprises 267 residues: Putative carbamate hydrolase RutD (267 aa).

An AB hydrolase-1 domain is found at 23-139 (VVLLSSGLGG…IQRCFDTRIH (117 aa)).

It belongs to the AB hydrolase superfamily. Hydrolase RutD family.

The enzyme catalyses carbamate + 2 H(+) = NH4(+) + CO2. In terms of biological role, involved in pyrimidine catabolism. May facilitate the hydrolysis of carbamate, a reaction that can also occur spontaneously. The protein is Putative carbamate hydrolase RutD of Caulobacter segnis (strain ATCC 21756 / DSM 7131 / JCM 7823 / NBRC 15250 / LMG 17158 / TK0059) (Mycoplana segnis).